A 519-amino-acid polypeptide reads, in one-letter code: Anthranilate synthase component 1 (519 aa).

L-tryptophan contacts are provided by residues Thr40 and 293–295 (PYM). 330–331 (GT) contributes to the chorismate binding site. Glu363 is a binding site for Mg(2+). Chorismate is bound by residues Tyr451, Arg471, 485-487 (GSG), and Gly487. Mg(2+) is bound at residue Glu500.

This sequence belongs to the anthranilate synthase component I family. As to quaternary structure, heterotetramer consisting of two non-identical subunits: a beta subunit (TrpG) and a large alpha subunit (TrpE). Requires Mg(2+) as cofactor.

It catalyses the reaction chorismate + L-glutamine = anthranilate + pyruvate + L-glutamate + H(+). It functions in the pathway amino-acid biosynthesis; L-tryptophan biosynthesis; L-tryptophan from chorismate: step 1/5. Its activity is regulated as follows. Feedback inhibited by tryptophan. Its function is as follows. Part of a heterotetrameric complex that catalyzes the two-step biosynthesis of anthranilate, an intermediate in the biosynthesis of L-tryptophan. In the first step, the glutamine-binding beta subunit (TrpG) of anthranilate synthase (AS) provides the glutamine amidotransferase activity which generates ammonia as a substrate that, along with chorismate, is used in the second step, catalyzed by the large alpha subunit of AS (TrpE) to produce anthranilate. In the absence of TrpG, TrpE can synthesize anthranilate directly from chorismate and high concentrations of ammonia. This chain is Anthranilate synthase component 1 (trpE), found in Buchnera aphidicola subsp. Diuraphis noxia.